Consider the following 358-residue polypeptide: Starch-binding domain-containing protein 1 (358 aa).

At Met-1–Ser-6 the chain is on the extracellular side. The chain crosses the membrane as a helical span at residues Ala-7 to Leu-23. Over Arg-24–His-358 the chain is Cytoplasmic. Residues Thr-30–Ala-42 show a composition bias toward basic and acidic residues. Disordered regions lie at residues Thr-30–Val-70 and Ser-104–Gly-151. Residues Pro-50–Gly-66 are compositionally biased toward low complexity. Ser-65 is modified (phosphoserine). A compositionally biased stretch (basic and acidic residues) spans Glu-106–Val-115. Ser-117 is subject to Phosphoserine. The segment covering Pro-126–Val-140 has biased composition (polar residues). A phosphoserine mark is found at Ser-148, Ser-175, Ser-188, and Ser-194. The short motif at His-200–Val-206 is the LIR element. Residues Ser-210, Ser-211, and Ser-220 each carry the phosphoserine modification. The CBM20 domain maps to Pro-258 to Ile-357.

In terms of assembly, interacts with the ATG8 family proteins GABARAP and GABARAPL1. Interacts with several glycogen-associated proteins, such as GYS2 (liver glycogen synthase), GDE (glycogen debranching enzyme), GBE1 (glycogen branching enzyme 1) and EPM2A (Laforin). In terms of processing, ubiquitinated, which leads to proteasomal degradation. In terms of tissue distribution, expressed at high level in skeletal and cardiac muscles. Moderately expressed in liver and placenta. No expression is found in pancreas, kidney or lung. Present in skeletal muscle, heart and placenta (at protein level).

Its subcellular location is the preautophagosomal structure membrane. The protein resides in the endoplasmic reticulum membrane. It is found in the cell membrane. It localises to the sarcolemma. The protein localises to the T-tubule. Functionally, acts as a cargo receptor for glycogen. Delivers its cargo to an autophagic pathway called glycophagy, resulting in the transport of glycogen to lysosomes. This Homo sapiens (Human) protein is Starch-binding domain-containing protein 1.